The primary structure comprises 764 residues: Subtilisin-like protease SBT3.1 (764 aa).

The first 32 residues, 1–32 (MIQTLKTDSSFRLCFAAIAFGFVFIMNGKLSS), serve as a signal peptide directing secretion. Residues 33–120 (GTTPHEFPVY…LLENRKLGLQ (88 aa)) constitute a propeptide, activation peptide. Residues 41–116 (VYIFYLGERK…EVIILLENRK (76 aa)) form the Inhibitor I9 domain. N76 carries an N-linked (GlcNAc...) asparagine glycan. In terms of domain architecture, Peptidase S8 spans 124 to 610 (TWDYLGQFST…GGLVNLEKAT (487 aa)). The active-site Charge relay system is D156. A glycan (N-linked (GlcNAc...) asparagine) is linked at N216. Catalysis depends on H230, which acts as the Charge relay system. N-linked (GlcNAc...) asparagine glycans are attached at residues N245 and N374. Catalysis depends on S541, which acts as the Charge relay system. Residues N674, N711, and N747 are each glycosylated (N-linked (GlcNAc...) asparagine).

It belongs to the peptidase S8 family.

The protein resides in the secreted. This chain is Subtilisin-like protease SBT3.1, found in Arabidopsis thaliana (Mouse-ear cress).